We begin with the raw amino-acid sequence, 395 residues long: Testis-expressed protein 44 (395 aa).

Disordered regions lie at residues methionine 1 to alanine 32, tryptophan 46 to serine 100, lysine 133 to serine 215, and phenylalanine 235 to proline 258. Over residues serine 53–serine 65 the composition is skewed to polar residues. Over residues proline 87–glutamine 98 the composition is skewed to low complexity. Positions serine 192–alanine 207 are enriched in basic and acidic residues. A Phosphoserine modification is found at serine 333.

As to expression, testis. Detected in germ cells at all stages of the seminiferous epithelium, strong expression in elongating spermatids (at protein level).

The protein resides in the cytoplasm. The protein is Testis-expressed protein 44 of Homo sapiens (Human).